The following is a 344-amino-acid chain: Follistatin (344 aa).

The first 29 residues, 1 to 29, serve as a signal peptide directing secretion; sequence MARPRHQPGGLCLLLLLLCQFMEDRSAQA. One can recognise a TB domain in the interval 30-103; the sequence is GNCWLRQAKN…TCENVDCGPG (74 aa). 18 cysteine pairs are disulfide-bonded: cysteine 32-cysteine 55, cysteine 42-cysteine 88, cysteine 56-cysteine 91, cysteine 95-cysteine 106, cysteine 100-cysteine 116, cysteine 118-cysteine 150, cysteine 122-cysteine 143, cysteine 132-cysteine 164, cysteine 168-cysteine 179, cysteine 173-cysteine 189, cysteine 192-cysteine 225, cysteine 196-cysteine 218, cysteine 207-cysteine 239, cysteine 245-cysteine 256, cysteine 250-cysteine 267, cysteine 270-cysteine 302, cysteine 274-cysteine 295, and cysteine 284-cysteine 316. The region spanning 94 to 117 is the Follistatin-like 1 domain; the sequence is TCENVDCGPGKKCRMNKKNKPRCV. A Kazal-like 1 domain is found at 112–166; that stretch reads NKPRCVCAPDCSNITWKGLVCGLDGKTYRNECALLKARCKEQPELQVQYQGKCKK. Residue asparagine 124 is glycosylated (N-linked (GlcNAc...) asparagine). The region spanning 167–190 is the Follistatin-like 2 domain; the sequence is TCRDVFCPGSSTCVVDQTNNAYCV. Residues 186–241 enclose the Kazal-like 2 domain; it reads NAYCVTCNRICPEPTSSEQYLCGNDGVTYPSACHLRKATCLLGRSIGLAYEGKCIK. The Follistatin-like 3 domain occupies 244-268; the sequence is SCDDIQCTGGKKCLWDFKVGRGRCS. One can recognise a Kazal-like 3 domain in the interval 261–318; that stretch reads KVGRGRCSLCGELCPESKSEEPVCASDNATYASECAMKEAACSSGVLLEVKHSGSCNS. Asparagine 288 carries an N-linked (GlcNAc...) asparagine glycan. The disordered stretch occupies residues 316–344; it reads CNSISEDTEDEEEDEDQDYSFPISSILEW. Over residues 321–333 the composition is skewed to acidic residues; that stretch reads EDTEDEEEDEDQD.

As to quaternary structure, monomer.

It localises to the secreted. In terms of biological role, binds directly to activin and functions as an activin antagonist. Specific inhibitor of the biosynthesis and secretion of pituitary follicle stimulating hormone (FSH). In Bubalus bubalis (Domestic water buffalo), this protein is Follistatin.